The chain runs to 791 residues: Major facilitator superfamily domain-containing protein 6 (791 aa).

A2 carries the N-acetylalanine modification. The residue at position 10 (T10) is a Phosphothreonine. The disordered stretch occupies residues 22–47; it reads LADPFNGISREPEPPSNETPSSTETS. A compositionally biased stretch (low complexity) spans 37-47; sequence SNETPSSTETS. Transmembrane regions (helical) follow at residues 73-93, 105-125, 132-152, 286-306, 335-355, and 369-389; these read VFYF…PVYY, LLVG…GVVA, KIVL…IGFV, AIFL…ASSV, WGLA…EVLI, and QIVF…ATQF. Residues 407 to 427 are disordered; it reads EIPQVERNNSTESSEETPTTT. The segment covering 416-427 has biased composition (low complexity); sequence STESSEETPTTT. 6 helical membrane-spanning segments follow: residues 450-470, 479-499, 507-527, 544-564, 579-599, and 605-625; these read VLFV…FLYW, TTLF…AYFF, IGHI…YIYI, GVTH…AVPP, LGLG…YFGA, and GIGM…WLAV. Disordered regions lie at residues 662–687 and 723–791; these read MPRI…NKPA and LQGT…AGGH. Residues 750–768 show a composition bias toward polar residues; the sequence is SRNQPSPDAAASQTQTSPA. Low complexity predominate over residues 782–791; that stretch reads QQAQLAAGGH.

This sequence belongs to the major facilitator superfamily. MFSD6 family. In terms of assembly, may interact with HLA-B62. In terms of tissue distribution, widely expressed. Expression levels in peripheral blood mononuclear cells are highly variable between individuals, including no expression at all.

The protein localises to the membrane. This Homo sapiens (Human) protein is Major facilitator superfamily domain-containing protein 6 (MFSD6).